The sequence spans 330 residues: 1,8-cineole synthase (330 aa).

Asp81 serves as a coordination point for Mg(2+). Residues 81–85 (DDHFD) carry the DDXXD motif motif. Substrate is bound at residue Arg174. 2 residues coordinate Mg(2+): Asn220 and Ser224. The NXXXSXXXE motif signature appears at 220 to 228 (NDVLSLEKE). Residue Lys227 coordinates substrate. Glu228 lines the Mg(2+) pocket. 314–315 (RY) provides a ligand contact to substrate.

The protein belongs to the terpene synthase family. Homodimer. It depends on Mg(2+) as a cofactor.

The enzyme catalyses (2E)-geranyl diphosphate + H2O = 1,8-cineole + diphosphate. It carries out the reaction neryl diphosphate + H2O = 1,8-cineole + diphosphate. In vitro, catalyzes the formation of 1,8-cineole from geranyl diphosphate (GPP). Can also accept neryl diphosphate (NPP) as substrate to produce 1,8-cineole. The polypeptide is 1,8-cineole synthase (Streptomyces clavuligerus).